Reading from the N-terminus, the 260-residue chain is Outer membrane protein assembly factor BamD (260 aa).

Positions 1–19 (MRKLKSFTFIALTAFAITA) are cleaved as a signal peptide. A lipid anchor (N-palmitoyl cysteine) is attached at Cys-20. Cys-20 is lipidated: S-diacylglycerol cysteine.

This sequence belongs to the BamD family. In terms of assembly, part of the Bam complex.

It localises to the cell outer membrane. Functionally, part of the outer membrane protein assembly complex, which is involved in assembly and insertion of beta-barrel proteins into the outer membrane. This Pasteurella multocida (strain Pm70) protein is Outer membrane protein assembly factor BamD.